The sequence spans 236 residues: Putative protein ZBED10P (236 aa).

The polypeptide is Putative protein ZBED10P (Homo sapiens (Human)).